We begin with the raw amino-acid sequence, 348 residues long: uncharacterized protein (348 aa).

The first 26 residues, M1 to K26, serve as a signal peptide directing secretion.

This is an uncharacterized protein from Bacillus subtilis (strain 168).